The primary structure comprises 342 residues: MEDSEEHHFSSVEEETRYWKELAMKYKQCAENIQEELCEFQEGSREYEAELETQLQQTESRNRDLLSENNRLRIELESVKEKFEMQHSEWYRQVSALEDDLAQTKAIKDQLQKYIRELEQANDDLERAKRAAIMSLEDFEQRLNQAIERNAFLESELDEKENLLESVQRLKDEARDLRQELAVQQKQEKPKTPMRTSLETERTDTAVQASLSLPSTPSLHRAPNINIPTPATFRRGFEDSYCATPLTPAARISALNIMGDLLRKVGALESKLASCRNFVYDQSPDRTTVSMYMNRDALETRMSPHQPLCDTGLVKRLEFGTRPSSTPGPMSHPSQSVVKMLL.

A coiled-coil region spans residues 45 to 189 (REYEAELETQ…ELAVQQKQEK (145 aa)). The interaction with PAFAH1B1 stretch occupies residues 89–157 (EWYRQVSALE…ERNAFLESEL (69 aa)). Disordered stretches follow at residues 182-203 (AVQQKQEKPKTPMRTSLETERT) and 320-342 (GTRPSSTPGPMSHPSQSVVKMLL). Polar residues predominate over residues 322 to 342 (RPSSTPGPMSHPSQSVVKMLL).

The protein belongs to the nudE family. Self-associates. Interacts with PAFAH1B1. In terms of processing, phosphorylated in mitosis.

It is found in the cytoplasm. The protein resides in the cytoskeleton. Its subcellular location is the microtubule organizing center. The protein localises to the centrosome. It localises to the spindle. It is found in the chromosome. The protein resides in the centromere. Its subcellular location is the kinetochore. The protein localises to the cleavage furrow. It localises to the cytoplasmic vesicle membrane. Its function is as follows. Required for centrosome duplication and formation and function of the mitotic spindle. The chain is Nuclear distribution protein nudE homolog 1 (NDE1) from Gallus gallus (Chicken).